The following is an 865-amino-acid chain: Alanine--tRNA ligase (865 aa).

4 residues coordinate Zn(2+): H554, H558, C656, and H660.

It belongs to the class-II aminoacyl-tRNA synthetase family. The cofactor is Zn(2+).

It is found in the cytoplasm. The catalysed reaction is tRNA(Ala) + L-alanine + ATP = L-alanyl-tRNA(Ala) + AMP + diphosphate. Catalyzes the attachment of alanine to tRNA(Ala) in a two-step reaction: alanine is first activated by ATP to form Ala-AMP and then transferred to the acceptor end of tRNA(Ala). Also edits incorrectly charged Ser-tRNA(Ala) and Gly-tRNA(Ala) via its editing domain. The sequence is that of Alanine--tRNA ligase from Francisella tularensis subsp. novicida (strain U112).